We begin with the raw amino-acid sequence, 100 residues long: Small ribosomal subunit protein uS14c (100 aa).

Belongs to the universal ribosomal protein uS14 family. In terms of assembly, part of the 30S ribosomal subunit.

It is found in the plastid. It localises to the chloroplast. In terms of biological role, binds 16S rRNA, required for the assembly of 30S particles. The sequence is that of Small ribosomal subunit protein uS14c from Helianthus annuus (Common sunflower).